The primary structure comprises 509 residues: Putative aldehyde dehydrogenase family 7 member A1 homolog (509 aa).

Glycine 244–glycine 249 provides a ligand contact to NAD(+). The active-site Proton acceptor is glutamate 266. Cysteine 300 (nucleophile) is an active-site residue.

It belongs to the aldehyde dehydrogenase family. As to quaternary structure, homotetramer.

The catalysed reaction is an aldehyde + NAD(+) + H2O = a carboxylate + NADH + 2 H(+). The chain is Putative aldehyde dehydrogenase family 7 member A1 homolog from Dictyostelium discoideum (Social amoeba).